We begin with the raw amino-acid sequence, 437 residues long: Argininosuccinate lyase (437 aa).

It belongs to the lyase 1 family. Argininosuccinate lyase subfamily.

The protein localises to the cytoplasm. The catalysed reaction is 2-(N(omega)-L-arginino)succinate = fumarate + L-arginine. Its pathway is amino-acid biosynthesis; L-arginine biosynthesis; L-arginine from L-ornithine and carbamoyl phosphate: step 3/3. This is Argininosuccinate lyase from Clostridium novyi (strain NT).